The chain runs to 514 residues: ATP synthase subunit alpha (514 aa).

Residue 170 to 177 (GDRQIGKT) coordinates ATP.

The protein belongs to the ATPase alpha/beta chains family. F-type ATPases have 2 components, CF(1) - the catalytic core - and CF(0) - the membrane proton channel. CF(1) has five subunits: alpha(3), beta(3), gamma(1), delta(1), epsilon(1). CF(0) has three main subunits: a(1), b(2) and c(9-12). The alpha and beta chains form an alternating ring which encloses part of the gamma chain. CF(1) is attached to CF(0) by a central stalk formed by the gamma and epsilon chains, while a peripheral stalk is formed by the delta and b chains.

The protein resides in the cell inner membrane. It carries out the reaction ATP + H2O + 4 H(+)(in) = ADP + phosphate + 5 H(+)(out). Its function is as follows. Produces ATP from ADP in the presence of a proton gradient across the membrane. The alpha chain is a regulatory subunit. The protein is ATP synthase subunit alpha of Ectopseudomonas mendocina (strain ymp) (Pseudomonas mendocina).